We begin with the raw amino-acid sequence, 185 residues long: dTTP/UTP pyrophosphatase (185 aa).

The Proton acceptor role is filled by Asp-64.

This sequence belongs to the Maf family. YhdE subfamily. It depends on a divalent metal cation as a cofactor.

Its subcellular location is the cytoplasm. It carries out the reaction dTTP + H2O = dTMP + diphosphate + H(+). It catalyses the reaction UTP + H2O = UMP + diphosphate + H(+). Its function is as follows. Nucleoside triphosphate pyrophosphatase that hydrolyzes dTTP and UTP. May have a dual role in cell division arrest and in preventing the incorporation of modified nucleotides into cellular nucleic acids. The polypeptide is dTTP/UTP pyrophosphatase (Leptospira borgpetersenii serovar Hardjo-bovis (strain JB197)).